Reading from the N-terminus, the 96-residue chain is Large ribosomal subunit protein bL28 (96 aa).

Positions 1-21 are disordered; it reads MSRVCELTGKGPMTGNNVSHA.

Belongs to the bacterial ribosomal protein bL28 family.

This Jannaschia sp. (strain CCS1) protein is Large ribosomal subunit protein bL28.